The following is a 327-amino-acid chain: Elongation factor P--(R)-beta-lysine ligase (327 aa).

80 to 82 is a substrate binding site; that stretch reads SPE. ATP is bound by residues 104-106 and Asn-113; that span reads RNE. Tyr-122 serves as a coordination point for substrate. ATP is bound at residue 246 to 247; that stretch reads EL. Glu-253 is a binding site for substrate. Residue Gly-302 participates in ATP binding.

Belongs to the class-II aminoacyl-tRNA synthetase family. EpmA subfamily. Homodimer.

It catalyses the reaction D-beta-lysine + L-lysyl-[protein] + ATP = N(6)-((3R)-3,6-diaminohexanoyl)-L-lysyl-[protein] + AMP + diphosphate + H(+). Its function is as follows. With EpmB is involved in the beta-lysylation step of the post-translational modification of translation elongation factor P (EF-P). Catalyzes the ATP-dependent activation of (R)-beta-lysine produced by EpmB, forming a lysyl-adenylate, from which the beta-lysyl moiety is then transferred to the epsilon-amino group of a conserved specific lysine residue in EF-P. The chain is Elongation factor P--(R)-beta-lysine ligase from Haemophilus ducreyi (strain 35000HP / ATCC 700724).